Consider the following 131-residue polypeptide: Heterochromatin silencing protein rss1 (131 aa).

As to quaternary structure, monomer.

The protein localises to the cytoplasm. Its subcellular location is the nucleus. Required for heterochromatin silencing within pericentromeric repeats and at telomers. Facilitates the recruitment of Clr6 histone deacetylase (HDAC) by interacting with histones. Also interacts with Rad25, which mediates heterochromatin silencing in DNA repeats by recruiting the RITS complex. Together with Rad25, forms a regulatory hub that defines heterochromatin silencing within tandem repeats via linking RNAi and HDAC. This Schizosaccharomyces pombe (strain 972 / ATCC 24843) (Fission yeast) protein is Heterochromatin silencing protein rss1 (rss1).